The following is a 341-amino-acid chain: L-threonine 3-dehydrogenase (341 aa).

Zn(2+) is bound at residue Cys38. Active-site charge relay system residues include Thr40 and His43. The Zn(2+) site is built by His63, Glu64, Cys93, Cys96, Cys99, and Cys107. NAD(+)-binding positions include Ile175, Asp195, Arg200, Leu262–Ile264, and Ile286–Tyr287.

It belongs to the zinc-containing alcohol dehydrogenase family. As to quaternary structure, homotetramer. Zn(2+) is required as a cofactor.

Its subcellular location is the cytoplasm. The catalysed reaction is L-threonine + NAD(+) = (2S)-2-amino-3-oxobutanoate + NADH + H(+). Its pathway is amino-acid degradation; L-threonine degradation via oxydo-reductase pathway; glycine from L-threonine: step 1/2. Functionally, catalyzes the NAD(+)-dependent oxidation of L-threonine to 2-amino-3-ketobutyrate. The chain is L-threonine 3-dehydrogenase from Shewanella sp. (strain W3-18-1).